The sequence spans 198 residues: uncharacterized protein (198 aa).

Positions 1–110 (MTGYFLPPQT…GTTVSDDFEG (110 aa)) constitute a PA14 domain.

Belongs to the flocculin family.

This is an uncharacterized protein from Saccharomyces cerevisiae (strain ATCC 204508 / S288c) (Baker's yeast).